The following is a 124-amino-acid chain: Large ribosomal subunit protein bL17 (124 aa).

The protein belongs to the bacterial ribosomal protein bL17 family. In terms of assembly, part of the 50S ribosomal subunit. Contacts protein L32.

This Trichlorobacter lovleyi (strain ATCC BAA-1151 / DSM 17278 / SZ) (Geobacter lovleyi) protein is Large ribosomal subunit protein bL17.